Reading from the N-terminus, the 682-residue chain is DNA-directed RNA polymerase subunit beta' (682 aa).

Zn(2+) is bound by residues C69, C71, C87, and C90. Residues D489, D491, and D493 each contribute to the Mg(2+) site.

Belongs to the RNA polymerase beta' chain family. RpoC1 subfamily. In plastids the minimal PEP RNA polymerase catalytic core is composed of four subunits: alpha, beta, beta', and beta''. When a (nuclear-encoded) sigma factor is associated with the core the holoenzyme is formed, which can initiate transcription. It depends on Mg(2+) as a cofactor. The cofactor is Zn(2+).

It localises to the plastid. The protein resides in the chloroplast. The catalysed reaction is RNA(n) + a ribonucleoside 5'-triphosphate = RNA(n+1) + diphosphate. In terms of biological role, DNA-dependent RNA polymerase catalyzes the transcription of DNA into RNA using the four ribonucleoside triphosphates as substrates. The protein is DNA-directed RNA polymerase subunit beta' of Acorus calamus var. americanus (American sweet flag).